A 555-amino-acid chain; its full sequence is Phosphomethylpyrimidine synthase (555 aa).

Residues N191, M220, Y249, H285, 305–307, 346–349, and E385 each bind substrate; these read SRG and DGLR. H389 contributes to the Zn(2+) binding site. Y412 is a binding site for substrate. H453 is a binding site for Zn(2+). [4Fe-4S] cluster-binding residues include C533, C536, and C541.

It belongs to the ThiC family. As to quaternary structure, homodimer. [4Fe-4S] cluster serves as cofactor.

It catalyses the reaction 5-amino-1-(5-phospho-beta-D-ribosyl)imidazole + S-adenosyl-L-methionine = 4-amino-2-methyl-5-(phosphooxymethyl)pyrimidine + CO + 5'-deoxyadenosine + formate + L-methionine + 3 H(+). The protein operates within cofactor biosynthesis; thiamine diphosphate biosynthesis. In terms of biological role, catalyzes the synthesis of the hydroxymethylpyrimidine phosphate (HMP-P) moiety of thiamine from aminoimidazole ribotide (AIR) in a radical S-adenosyl-L-methionine (SAM)-dependent reaction. The protein is Phosphomethylpyrimidine synthase of Ehrlichia ruminantium (strain Gardel).